Here is a 358-residue protein sequence, read N- to C-terminus: Probable D-xylulose reductase A (358 aa).

Positions 47, 72, and 73 each coordinate Zn(2+). 182–187 (GAGPVG) is an NAD(+) binding site.

It belongs to the zinc-containing alcohol dehydrogenase family. It depends on Zn(2+) as a cofactor.

The catalysed reaction is xylitol + NAD(+) = D-xylulose + NADH + H(+). It functions in the pathway carbohydrate degradation; L-arabinose degradation via L-arabinitol; D-xylulose 5-phosphate from L-arabinose (fungal route): step 4/5. In terms of biological role, xylitol dehydrogenase which catalyzes the conversion of xylitol to D-xylulose. Xylose is a major component of hemicelluloses such as xylan. Most fungi utilize D-xylose via three enzymatic reactions, xylose reductase (XR), xylitol dehydrogenase (XDH), and xylulokinase, to form xylulose 5-phosphate, which enters pentose phosphate pathway. The protein is Probable D-xylulose reductase A (xdhA) of Aspergillus clavatus (strain ATCC 1007 / CBS 513.65 / DSM 816 / NCTC 3887 / NRRL 1 / QM 1276 / 107).